A 229-amino-acid polypeptide reads, in one-letter code: Enolase-phosphatase E1 (229 aa).

Belongs to the HAD-like hydrolase superfamily. MasA/MtnC family. In terms of assembly, monomer. The cofactor is Mg(2+).

The catalysed reaction is 5-methylsulfanyl-2,3-dioxopentyl phosphate + H2O = 1,2-dihydroxy-5-(methylsulfanyl)pent-1-en-3-one + phosphate. It functions in the pathway amino-acid biosynthesis; L-methionine biosynthesis via salvage pathway; L-methionine from S-methyl-5-thio-alpha-D-ribose 1-phosphate: step 3/6. It participates in amino-acid biosynthesis; L-methionine biosynthesis via salvage pathway; L-methionine from S-methyl-5-thio-alpha-D-ribose 1-phosphate: step 4/6. In terms of biological role, bifunctional enzyme that catalyzes the enolization of 2,3-diketo-5-methylthiopentyl-1-phosphate (DK-MTP-1-P) into the intermediate 2-hydroxy-3-keto-5-methylthiopentenyl-1-phosphate (HK-MTPenyl-1-P), which is then dephosphorylated to form the acireductone 1,2-dihydroxy-3-keto-5-methylthiopentene (DHK-MTPene). This Enterobacter sp. (strain 638) protein is Enolase-phosphatase E1.